The chain runs to 171 residues: Glycine cleavage system H protein 4 (171 aa).

The Lipoyl-binding domain occupies 30 to 112; that stretch reads FAEVGITDYA…YEAGWIAVIE (83 aa). K71 carries the N6-lipoyllysine modification. The tract at residues 139-171 is disordered; sequence EKEEEVEVKEEELIETESIEELSEEELGYEENK.

The protein belongs to the GcvH family. As to quaternary structure, the glycine cleavage system is composed of four proteins: P, T, L and H. Requires (R)-lipoate as cofactor.

Its function is as follows. The glycine cleavage system catalyzes the degradation of glycine. The H protein shuttles the methylamine group of glycine from the P protein to the T protein. This chain is Glycine cleavage system H protein 4, found in Aquifex aeolicus (strain VF5).